Reading from the N-terminus, the 730-residue chain is Kinesin-like protein KIF2C (730 aa).

Residues 1–256 form a globular region; sequence MERLVATRLV…MDCHRISMAD (256 aa). Positions 79–98 are disordered; the sequence is NMPPQRNVSSQNHKRKTISK. A negative regulator of microtubule-binding region spans residues 211-242; that stretch reads EQRAQNYERRMKRAQDYDTSVPNWEFGKMIKE. The region spanning 262 to 592 is the Kinesin motor domain; the sequence is RICVCVRKRP…LRYADRVKEL (331 aa). Residues arginine 268 and 352 to 359 contribute to the ATP site; that span reads GQTGSGKT. Residues 599 to 730 adopt a coiled-coil conformation; it reads TNDDNLQMED…QISKKKRSNK (132 aa).

It belongs to the TRAFAC class myosin-kinesin ATPase superfamily. Kinesin family. MCAK/KIF2 subfamily.

The protein resides in the cytoplasm. It is found in the cytoskeleton. It localises to the nucleus. Its subcellular location is the chromosome. The protein localises to the centromere. The protein resides in the kinetochore. Its function is as follows. Promotes ATP-dependent removal of tubulin dimers from microtubules. Regulates the turnover of microtubules at the kinetochore and functions in chromosome segregation during mitosis. May play a role in chromosome congression and may be required for the lateral to end-on conversion of the chromosome-microtubule attachment. In Xenopus laevis (African clawed frog), this protein is Kinesin-like protein KIF2C (kif2c).